Here is a 122-residue protein sequence, read N- to C-terminus: Biogenesis of lysosome-related organelles complex 1 subunit CNL1 (122 aa).

A compositionally biased stretch (basic and acidic residues) spans 1 to 10 (MQDNSSHSRE). The disordered stretch occupies residues 1 to 21 (MQDNSSHSRESASAGDDPLGI). Positions 63–95 (ENTIDKNIAKFKELLEKCDTLENHYEMLNQLAI) form a coiled coil.

This sequence belongs to the BLOC1S4 family. In terms of assembly, component of the biogenesis of lysosome-related organelles complex-1 (BLOC-1) composed of at least BLI1, BLS1, CNL1, KXD1, SNN1 and VAB2.

It localises to the cytoplasm. Its function is as follows. Component of the biogenesis of lysosome-related organelles complex-1 (BLOC-1), a complex that is involved in endosomal cargo sorting. The polypeptide is Biogenesis of lysosome-related organelles complex 1 subunit CNL1 (CLN1) (Saccharomyces cerevisiae (strain RM11-1a) (Baker's yeast)).